Here is a 395-residue protein sequence, read N- to C-terminus: uncharacterized protein (395 aa).

Over residues serine 286 to histidine 306 the composition is skewed to low complexity. Residues serine 286–valine 395 are disordered. Positions arginine 350–proline 362 are enriched in pro residues. Positions glutamine 364 to serine 385 are enriched in polar residues.

This is an uncharacterized protein from Caenorhabditis elegans.